We begin with the raw amino-acid sequence, 340 residues long: Aldose 1-epimerase (340 aa).

Arg77 contributes to the substrate binding site. His172 (proton donor) is an active-site residue. Asp243 lines the substrate pocket. Glu305 acts as the Proton acceptor in catalysis.

Belongs to the aldose epimerase family.

The protein localises to the cytoplasm. It carries out the reaction alpha-D-glucose = beta-D-glucose. The protein operates within carbohydrate metabolism; hexose metabolism. Its function is as follows. Mutarotase converts alpha-aldose to the beta-anomer. It is active on D-glucose, L-arabinose, D-xylose, D-galactose, maltose and lactose. The sequence is that of Aldose 1-epimerase (galM) from Haemophilus influenzae (strain ATCC 51907 / DSM 11121 / KW20 / Rd).